Reading from the N-terminus, the 395-residue chain is MTLQPTPADRFTFGLWTVGWTGADPFGVATRPALDPVEAVHKLSELGAYGITFHDNDLVPFDATASERELILKNFKAALAETGLKTPMVTTNLFSHPVFKDGGFTSNDRSVRRFALSKVLQNIDLAAELGAETFVMWGGREGSEYDGSKDLSAALDRMKEGVDTAAAYIKDKGYGLRIALEPKPNEPRGDIFLPTVGHGLAFIAQLEHGDIVGLNPETGHEQMAGLNFTHGIAQALWAGKLFHIDLNGQRGIKYDQDLVFGHGDLTSAFFTVDLLENGFPNGGPKYDGPRHFDYKPSRTDGYDGVWESAKSNMSMYLLLKERALAFRADPDVQEALKTSGVFELGEPTLAAGETTADLLADASAFAEFDADAAAQRSFAFVRLNQLAIEHLLGAR.

Active-site residues include H54 and D57. Mg(2+) is bound by residues E181, E217, H220, D245, D255, D257, and D293.

It belongs to the xylose isomerase family. As to quaternary structure, homotetramer. It depends on Mg(2+) as a cofactor.

It localises to the cytoplasm. It catalyses the reaction alpha-D-xylose = alpha-D-xylulofuranose. The chain is Xylose isomerase from Arthrobacter sp. (strain FB24).